Here is a 22-residue protein sequence, read N- to C-terminus: Caerin-3.3 (22 aa).

Position 22 is a lysine amide (K22).

In terms of tissue distribution, expressed by the skin parotoid and/or rostral glands.

It localises to the secreted. In terms of biological role, antibacterial peptide, that adopts an alpha helical conformation which can disrupt bacterial membranes. Each caerin displays a different antimicrobial specificity. This Ranoidea caerulea (Green tree frog) protein is Caerin-3.3.